The chain runs to 447 residues: Enolase (447 aa).

Position 168 (glutamine 168) interacts with (2R)-2-phosphoglycerate. The active-site Proton donor is the glutamate 210. Residues aspartate 247, glutamate 292, and aspartate 319 each contribute to the Mg(2+) site. Positions 344, 373, 374, and 395 each coordinate (2R)-2-phosphoglycerate. The active-site Proton acceptor is lysine 344.

It belongs to the enolase family. Component of the RNA degradosome, a multiprotein complex involved in RNA processing and mRNA degradation. Requires Mg(2+) as cofactor.

It is found in the cytoplasm. It localises to the secreted. Its subcellular location is the cell surface. It carries out the reaction (2R)-2-phosphoglycerate = phosphoenolpyruvate + H2O. Its pathway is carbohydrate degradation; glycolysis; pyruvate from D-glyceraldehyde 3-phosphate: step 4/5. Catalyzes the reversible conversion of 2-phosphoglycerate (2-PG) into phosphoenolpyruvate (PEP). It is essential for the degradation of carbohydrates via glycolysis. This is Enolase from Blochmanniella floridana.